A 592-amino-acid polypeptide reads, in one-letter code: BRCA1-associated protein (592 aa).

Serine 52 is subject to Phosphoserine. The disordered stretch occupies residues 78 to 124 (KSNPDELKTTVEERKSSEASPTAQRSKDHSKECINAAPDSPSKQLPD). Residues 80–94 (NPDELKTTVEERKSS) are compositionally biased toward basic and acidic residues. Serine 97, serine 117, and serine 119 each carry phosphoserine. An RING-type zinc finger spans residues 264 to 304 (CTVCLERMDESVNGILTTLCNHSFHSQCLQRWDDTTCPVCR). The UBP-type; degenerate zinc finger occupies 301 to 393 (PVCRYCQTPE…GKIVQYECEG (93 aa)). 8 residues coordinate Zn(2+): cysteine 317, cysteine 320, cysteine 329, cysteine 332, cysteine 337, histidine 344, histidine 348, and histidine 354. Positions 429–537 (RIEKDTAEEI…EIQEQLRDVM (109 aa)) form a coiled coil. The tract at residues 565–592 (AMASASSPASSGGSGKLPSRKGRSKRGK) is disordered. Residues 582–592 (PSRKGRSKRGK) are compositionally biased toward basic residues.

As to quaternary structure, interacts with the nuclear localization signal of BRCA1 and with the N-terminal of KSR1. The C-terminal portion of BCRA1 interacts with DDB1. As to expression, expressed in breast epithelial cell lines.

Its subcellular location is the cytoplasm. It catalyses the reaction S-ubiquitinyl-[E2 ubiquitin-conjugating enzyme]-L-cysteine + [acceptor protein]-L-lysine = [E2 ubiquitin-conjugating enzyme]-L-cysteine + N(6)-ubiquitinyl-[acceptor protein]-L-lysine.. It participates in protein modification; protein ubiquitination. Its function is as follows. Negatively regulates MAP kinase activation by limiting the formation of Raf/MEK complexes probably by inactivation of the KSR1 scaffold protein. Also acts as a Ras responsive E3 ubiquitin ligase that, on activation of Ras, is modified by auto-polyubiquitination resulting in the release of inhibition of Raf/MEK complex formation. May also act as a cytoplasmic retention protein with a role in regulating nuclear transport. This Homo sapiens (Human) protein is BRCA1-associated protein.